We begin with the raw amino-acid sequence, 452 residues long: Glutathione gamma-glutamylcysteinyltransferase 2 (452 aa).

The Peptidase C83 domain maps to 1 to 220 (MSMASLYRRS…GFMLISRPHR (220 aa)). Residues 287–315 (EDVNQNLSSEEKSRLKLKQELLKQVQETK) adopt a coiled-coil conformation.

The protein belongs to the phytochelatin synthase family. In terms of tissue distribution, expressed in shoots, roots, leaves, stems and flowers.

It catalyses the reaction [Glu(-Cys)](n)-Gly + glutathione + H(+) = [Glu(-Cys)](n+1)-Gly + glycine. Its activity is regulated as follows. Requires cadmium for activity. Also activated in heterologous system by AsO(4)(3-) ions, but not by Cu(2+), Zn(2+), Mn(2+) or Ni(2+) ions. Its function is as follows. Involved in the synthesis of phytochelatins (PC) and homophytochelatins (hPC), the heavy-metal-binding peptides of plants. The polypeptide is Glutathione gamma-glutamylcysteinyltransferase 2 (PCS2) (Arabidopsis thaliana (Mouse-ear cress)).